Reading from the N-terminus, the 340-residue chain is MTEKNAYAQSGVDVEAGYEVVERIKKHVARTERAGVMGALGGFGGMFDLSKTGVKEPVLISGTDGVGTKLMLAIKYDKHDTIGQDCVAMCVNDIIAAGAEPLYFLDYIATGKNEPAKLEQVVAGVAEGCVQAGAALIGGETAEMPGMYGEDDYDLAGFAVGIAEKSQIIDGSKVSEGDVLLGLASSGIHSNGYSLVRRVFADYEGEAILPELEGKALKEVLLEPTRIYVKAVLPLVKENLVNGIAHITGGGFIENVPRMFSEELAAEIWEEKVPVLPIFKALETYGEIKHDEMFEIFNMGIGMMLAVKAENVARVKELLDEPVYEIGRIIKKEDKSVIIK.

The protein belongs to the AIR synthase family.

The protein resides in the cytoplasm. It catalyses the reaction 2-formamido-N(1)-(5-O-phospho-beta-D-ribosyl)acetamidine + ATP = 5-amino-1-(5-phospho-beta-D-ribosyl)imidazole + ADP + phosphate + H(+). The protein operates within purine metabolism; IMP biosynthesis via de novo pathway; 5-amino-1-(5-phospho-D-ribosyl)imidazole from N(2)-formyl-N(1)-(5-phospho-D-ribosyl)glycinamide: step 2/2. The chain is Phosphoribosylformylglycinamidine cyclo-ligase from Streptococcus uberis (strain ATCC BAA-854 / 0140J).